The following is a 451-amino-acid chain: Uronate isomerase (451 aa).

It belongs to the metallo-dependent hydrolases superfamily. Uronate isomerase family.

The catalysed reaction is D-glucuronate = D-fructuronate. It catalyses the reaction aldehydo-D-galacturonate = keto-D-tagaturonate. The protein operates within carbohydrate metabolism; pentose and glucuronate interconversion. The sequence is that of Uronate isomerase from Thermotoga petrophila (strain ATCC BAA-488 / DSM 13995 / JCM 10881 / RKU-1).